A 315-amino-acid polypeptide reads, in one-letter code: uncharacterized protein (315 aa).

Coiled coils occupy residues 184-212 and 238-275; these read AGEE…TPEQ and EEHR…YKEK.

It belongs to the IIV-6 287R family.

This is an uncharacterized protein from Acheta domesticus (House cricket).